The sequence spans 101 residues: Nucleoid-associated protein Acid345_1974 (101 aa).

This sequence belongs to the YbaB/EbfC family. As to quaternary structure, homodimer.

The protein resides in the cytoplasm. It is found in the nucleoid. Its function is as follows. Binds to DNA and alters its conformation. May be involved in regulation of gene expression, nucleoid organization and DNA protection. In Koribacter versatilis (strain Ellin345), this protein is Nucleoid-associated protein Acid345_1974.